Here is a 299-residue protein sequence, read N- to C-terminus: J domain-containing protein CG6693 (299 aa).

The region spanning 15 to 82 (DVYKLMELAR…QKRALYDEQG (68 aa)) is the J domain. Ser239 is modified (phosphoserine). A disordered region spans residues 266-299 (FEKKKKKSKKPAAKQETKPKLNGVKAGRVEKGKN). Over residues 268–277 (KKKKKSKKPA) the composition is skewed to basic residues.

The polypeptide is J domain-containing protein CG6693 (Drosophila melanogaster (Fruit fly)).